Here is a 510-residue protein sequence, read N- to C-terminus: 2,3-bisphosphoglycerate-independent phosphoglycerate mutase (510 aa).

2 residues coordinate Mn(2+): D14 and S64. The active-site Phosphoserine intermediate is S64. Substrate-binding positions include H125, 155 to 156, R187, R193, 259 to 262, and K332; these read RD and RADR. Residues D399, H403, D440, H441, and H459 each coordinate Mn(2+).

This sequence belongs to the BPG-independent phosphoglycerate mutase family. Monomer. It depends on Mn(2+) as a cofactor.

It carries out the reaction (2R)-2-phosphoglycerate = (2R)-3-phosphoglycerate. The protein operates within carbohydrate degradation; glycolysis; pyruvate from D-glyceraldehyde 3-phosphate: step 3/5. Its function is as follows. Catalyzes the interconversion of 2-phosphoglycerate and 3-phosphoglycerate. The chain is 2,3-bisphosphoglycerate-independent phosphoglycerate mutase from Pseudomonas syringae pv. syringae (strain B728a).